We begin with the raw amino-acid sequence, 166 residues long: 3-isopropylmalate dehydratase small subunit (166 aa).

Belongs to the LeuD family. LeuD type 2 subfamily. Heterodimer of LeuC and LeuD.

It carries out the reaction (2R,3S)-3-isopropylmalate = (2S)-2-isopropylmalate. The protein operates within amino-acid biosynthesis; L-leucine biosynthesis; L-leucine from 3-methyl-2-oxobutanoate: step 2/4. Catalyzes the isomerization between 2-isopropylmalate and 3-isopropylmalate, via the formation of 2-isopropylmaleate. This Moorella thermoacetica (strain ATCC 39073 / JCM 9320) protein is 3-isopropylmalate dehydratase small subunit.